Reading from the N-terminus, the 625-residue chain is Arginine--tRNA ligase (625 aa).

The 'HIGH' region signature appears at 117–127 (ANPIHPLHIGH).

Belongs to the class-I aminoacyl-tRNA synthetase family.

The protein localises to the cytoplasm. The catalysed reaction is tRNA(Arg) + L-arginine + ATP = L-arginyl-tRNA(Arg) + AMP + diphosphate. The protein is Arginine--tRNA ligase of Saccharolobus solfataricus (strain ATCC 35092 / DSM 1617 / JCM 11322 / P2) (Sulfolobus solfataricus).